A 266-amino-acid chain; its full sequence is Glucosamine-6-phosphate deaminase (266 aa).

Catalysis depends on D72, which acts as the Proton acceptor; for enolization step. The For ring-opening step role is filled by D141. Catalysis depends on H143, which acts as the Proton acceptor; for ring-opening step. Catalysis depends on E148, which acts as the For ring-opening step.

Belongs to the glucosamine/galactosamine-6-phosphate isomerase family. NagB subfamily. Homohexamer.

The catalysed reaction is alpha-D-glucosamine 6-phosphate + H2O = beta-D-fructose 6-phosphate + NH4(+). Its pathway is amino-sugar metabolism; N-acetylneuraminate degradation; D-fructose 6-phosphate from N-acetylneuraminate: step 5/5. With respect to regulation, allosterically activated by N-acetylglucosamine 6-phosphate (GlcNAc6P). In terms of biological role, catalyzes the reversible isomerization-deamination of glucosamine 6-phosphate (GlcN6P) to form fructose 6-phosphate (Fru6P) and ammonium ion. The chain is Glucosamine-6-phosphate deaminase from Citrobacter koseri (strain ATCC BAA-895 / CDC 4225-83 / SGSC4696).